The following is a 109-amino-acid chain: uncharacterized protein (109 aa).

A run of 2 helical transmembrane segments spans residues 19–39 (LELV…CLIP) and 53–73 (YFID…FYPF).

It localises to the membrane. This is an uncharacterized protein from Saccharomyces cerevisiae (strain ATCC 204508 / S288c) (Baker's yeast).